The primary structure comprises 189 residues: Protein CURLY FLAG LEAF 1 (189 aa).

An EAR motif is present at residues 50–55 (TLELNS). The 35-residue stretch at 57 to 91 (LSLPCHWEQCLDLKTGEIYYINWKNGMRVKEDPRK) folds into the WW domain. The tract at residues 90-148 (RKVMNADPDSGDSYGTVCSEEDSSYYDSEESSSESSPSSRENHKEEEEEEEEEEEEEED) is disordered. Acidic residues-rich tracts occupy residues 108–121 (SEED…EESS) and 135–148 (EEEE…EEED).

As to quaternary structure, interacts with BHLH122/CFLAP1 and BHLH80/CFLAP2. Binds to HDG1. In terms of tissue distribution, mostly observed in roots, flowers and siliques. Expressed in cells differentiated from epidermal cells such as trichomes, stigmatic papillar cells and guard cells, as well as in tissues undergoing abscission and dehiscence.

Negatively regulates the cuticle development by interacting with the HD-ZIP IV transcription factor HDG1. The chain is Protein CURLY FLAG LEAF 1 from Arabidopsis thaliana (Mouse-ear cress).